Reading from the N-terminus, the 463-residue chain is Golgi-associated PDZ and coiled-coil motif-containing protein (463 aa).

Ser2 is subject to N-acetylserine. Residues 85–201 (AQTVSQINHK…RHIAVLQAEV (117 aa)) adopt a coiled-coil conformation. The region spanning 289–372 (KVLLLKEDHE…EIEFEVVYVA (84 aa)) is the PDZ domain. 2 positions are modified to phosphoserine: Ser402 and Ser405.

In terms of assembly, homooligomer. Interacts with FZD5. Interacts with FZD8. Interacts with GRID2 and BECN1. Interacts with CSPG5. Interacts with CLCN3. Interacts with STX6. Interacts with CFTR. Interacts with ASIC3. Interacts with GOLGA3. Interacts with NLGN1. Interacts with RHOQ. Interacts with MARCHF2; the interaction leads to CFTR ubiquitination and degradation. May interact with CACNG2. Interacts with CCDC62. Ubiquitously expressed (at protein level). Expressed in dorsal root glanglion (DRG), spinal cord and brain. Isoform 1 is preferentially expressed in whole brain (at protein level) and cerebellum. Expressed in spermatocytes and spermatides but not in Sertoli cells and spermatogonia.

Its subcellular location is the cytoplasm. It is found in the golgi apparatus membrane. It localises to the golgi apparatus. The protein resides in the trans-Golgi network membrane. The protein localises to the synapse. Its subcellular location is the postsynaptic density. It is found in the cell projection. It localises to the dendrite. Plays a role in intracellular protein trafficking and degradation. May regulate CFTR chloride currents and acid-induced ASIC3 currents by modulating cell surface expression of both channels. May also regulate the intracellular trafficking of the ADR1B receptor. May play a role in autophagy. Together with MARCHF2 mediates the ubiquitination and lysosomal degradation of CFTR. Overexpression results in CFTR intracellular retention and degradation in the lysosomes. This Mus musculus (Mouse) protein is Golgi-associated PDZ and coiled-coil motif-containing protein.